Reading from the N-terminus, the 343-residue chain is Putative MO25-like protein At4g17270 (343 aa).

This sequence belongs to the Mo25 family.

The sequence is that of Putative MO25-like protein At4g17270 from Arabidopsis thaliana (Mouse-ear cress).